Reading from the N-terminus, the 133-residue chain is Nickel-responsive regulator (133 aa).

The Ni(2+) site is built by H76, H87, H89, and C95.

Belongs to the transcriptional regulatory CopG/NikR family. Homotetramer. It depends on Ni(2+) as a cofactor.

Functionally, transcriptional repressor of the nikABCDE operon. Is active in the presence of excessive concentrations of intracellular nickel. The sequence is that of Nickel-responsive regulator from Escherichia coli (strain SMS-3-5 / SECEC).